Here is a 279-residue protein sequence, read N- to C-terminus: Energy-coupling factor transporter ATP-binding protein EcfA1 (279 aa).

Residues 8 to 240 enclose the ABC transporter domain; sequence IKFENVSFSY…KQFLRDINLD (233 aa). Residue 41–48 participates in ATP binding; the sequence is GHNGSGKS.

The protein belongs to the ABC transporter superfamily. Energy-coupling factor EcfA family. Forms a stable energy-coupling factor (ECF) transporter complex composed of 2 membrane-embedded substrate-binding proteins (S component), 2 ATP-binding proteins (A component) and 2 transmembrane proteins (T component).

The protein resides in the cell membrane. In terms of biological role, ATP-binding (A) component of a common energy-coupling factor (ECF) ABC-transporter complex. Unlike classic ABC transporters this ECF transporter provides the energy necessary to transport a number of different substrates. This chain is Energy-coupling factor transporter ATP-binding protein EcfA1, found in Mycoplasmoides gallisepticum (strain R(low / passage 15 / clone 2)) (Mycoplasma gallisepticum).